A 221-amino-acid polypeptide reads, in one-letter code: GTP cyclohydrolase 1 (221 aa).

C111, H114, and C182 together coordinate Zn(2+).

Belongs to the GTP cyclohydrolase I family. Homomer.

The enzyme catalyses GTP + H2O = 7,8-dihydroneopterin 3'-triphosphate + formate + H(+). It functions in the pathway cofactor biosynthesis; 7,8-dihydroneopterin triphosphate biosynthesis; 7,8-dihydroneopterin triphosphate from GTP: step 1/1. This chain is GTP cyclohydrolase 1, found in Erwinia tasmaniensis (strain DSM 17950 / CFBP 7177 / CIP 109463 / NCPPB 4357 / Et1/99).